A 303-amino-acid chain; its full sequence is Probable 5-dehydro-4-deoxyglucarate dehydratase (303 aa).

It belongs to the DapA family.

The catalysed reaction is 5-dehydro-4-deoxy-D-glucarate + H(+) = 2,5-dioxopentanoate + CO2 + H2O. Its pathway is carbohydrate acid metabolism; D-glucarate degradation; 2,5-dioxopentanoate from D-glucarate: step 2/2. The polypeptide is Probable 5-dehydro-4-deoxyglucarate dehydratase (Pseudomonas putida (strain ATCC 700007 / DSM 6899 / JCM 31910 / BCRC 17059 / LMG 24140 / F1)).